Here is a 202-residue protein sequence, read N- to C-terminus: Small ribosomal subunit protein uS4c (202 aa).

Residues 90 to 153 (MRLDNVIFRL…KSEAIISKNI (64 aa)) enclose the S4 RNA-binding domain.

This sequence belongs to the universal ribosomal protein uS4 family. Part of the 30S ribosomal subunit. Contacts protein S5. The interaction surface between S4 and S5 is involved in control of translational fidelity.

The protein resides in the plastid. The protein localises to the chloroplast. Functionally, one of the primary rRNA binding proteins, it binds directly to 16S rRNA where it nucleates assembly of the body of the 30S subunit. Its function is as follows. With S5 and S12 plays an important role in translational accuracy. This Hypopterygium laricinum (Moss) protein is Small ribosomal subunit protein uS4c (rps4).